Here is an 89-residue protein sequence, read N- to C-terminus: Small ribosomal subunit protein uS15 (89 aa).

This sequence belongs to the universal ribosomal protein uS15 family. As to quaternary structure, part of the 30S ribosomal subunit. Forms a bridge to the 50S subunit in the 70S ribosome, contacting the 23S rRNA.

Its function is as follows. One of the primary rRNA binding proteins, it binds directly to 16S rRNA where it helps nucleate assembly of the platform of the 30S subunit by binding and bridging several RNA helices of the 16S rRNA. In terms of biological role, forms an intersubunit bridge (bridge B4) with the 23S rRNA of the 50S subunit in the ribosome. The polypeptide is Small ribosomal subunit protein uS15 (Polynucleobacter necessarius subsp. necessarius (strain STIR1)).